The sequence spans 212 residues: VDNEAIYDICRRNLGIERPGYTNLNRLIAHVVSSITASLRFDGSLNVDLNEFQTNLVPYPRIHFPLVTYAPVISAAKAVHEANSVSEITNACFEPNNQMVKCDPRNGKYMATCLLYRGDVVTKDVNAAVAAVRTKRTIQFVDWCPTGFKLGVCYQPPQHVPHGDLAKVDRAVCMLSNTTSIAEAWPRLDHKFDLMYSKRAFVHWYVGEGMEE.

Asparagine 3 and asparagine 25 together coordinate GTP. Glutamate 51 is a catalytic residue.

This sequence belongs to the tubulin family. Dimer of alpha and beta chains. A typical microtubule is a hollow water-filled tube with an outer diameter of 25 nm and an inner diameter of 15 nM. Alpha-beta heterodimers associate head-to-tail to form protofilaments running lengthwise along the microtubule wall with the beta-tubulin subunit facing the microtubule plus end conferring a structural polarity. Microtubules usually have 13 protofilaments but different protofilament numbers can be found in some organisms and specialized cells. Mg(2+) is required as a cofactor.

The protein resides in the cytoplasm. Its subcellular location is the cytoskeleton. The enzyme catalyses GTP + H2O = GDP + phosphate + H(+). In terms of biological role, tubulin is the major constituent of microtubules, a cylinder consisting of laterally associated linear protofilaments composed of alpha- and beta-tubulin heterodimers. Microtubules grow by the addition of GTP-tubulin dimers to the microtubule end, where a stabilizing cap forms. Below the cap, tubulin dimers are in GDP-bound state, owing to GTPase activity of alpha-tubulin. This is Tubulin alpha chain (TUB-A) from Pneumocystis carinii.